The sequence spans 69 residues: U2-agatoxin-Ao1g (69 aa).

An N-terminal signal peptide occupies residues 1-20; sequence MKAIISLLLISAMVFSMIEA. Residues 21–34 constitute a propeptide that is removed on maturation; that stretch reads VPVEEGLQLFEGER. Intrachain disulfides connect cysteine 36–cysteine 52, cysteine 43–cysteine 57, and cysteine 51–cysteine 67. Leucine 68 is subject to Leucine amide.

The protein belongs to the neurotoxin 01 (U2-agtx) family. Expressed by the venom gland.

It is found in the secreted. Its function is as follows. Insect active toxin causing rapid but reversible paralysis in crickets. No activity shown in mammals. Does not show effect on mammalian voltage-gated calcium channels. In Agelena orientalis (Funnel-web spider), this protein is U2-agatoxin-Ao1g.